A 425-amino-acid chain; its full sequence is E3 ubiquitin-protein ligase GW2 (425 aa).

An RING-type; degenerate zinc finger spans residues 62 to 105 (CPICFLYYPSLNRSKCCSKGICTECFLQMKPTHTAQPTQCPFCK).

As to expression, expressed in roots, shoots, leaves, inflorescence meristems, stamens, pistils, spikelet hulls and endosperms 4 days after fertilization.

Its subcellular location is the cytoplasm. The enzyme catalyses S-ubiquitinyl-[E2 ubiquitin-conjugating enzyme]-L-cysteine + [acceptor protein]-L-lysine = [E2 ubiquitin-conjugating enzyme]-L-cysteine + N(6)-ubiquitinyl-[acceptor protein]-L-lysine.. Its pathway is protein modification; protein ubiquitination. In terms of biological role, E3 ubiquitin-protein ligase involved in the regulation of grain size. May limit grain width and weight by restricting cell proliferation of the spikelet hull. Possesses E3 ubiquitin-protein ligase activity in vitro. The sequence is that of E3 ubiquitin-protein ligase GW2 from Oryza sativa subsp. indica (Rice).